We begin with the raw amino-acid sequence, 310 residues long: Putative type II methyltransferase M.MJ0563P (310 aa).

The region spanning 1-310 (MNVIDLFSGC…AIAKEIKKQL (310 aa)) is the SAM-dependent MTase C5-type domain. Residue cysteine 77 is part of the active site.

It belongs to the class I-like SAM-binding methyltransferase superfamily. C5-methyltransferase family.

The enzyme catalyses a 2'-deoxycytidine in DNA + S-adenosyl-L-methionine = a 5-methyl-2'-deoxycytidine in DNA + S-adenosyl-L-homocysteine + H(+). Its function is as follows. A putative methylase that may protect DNA from cleavage by an unknown endonuclease. The sequence is that of Putative type II methyltransferase M.MJ0563P from Methanocaldococcus jannaschii (strain ATCC 43067 / DSM 2661 / JAL-1 / JCM 10045 / NBRC 100440) (Methanococcus jannaschii).